The chain runs to 1366 residues: DNA-directed RNA polymerase subunit beta' (1366 aa).

Basic residues predominate over residues Met1–Asn23. The segment at Met1 to Ile25 is disordered. Positions 248, 315, 322, and 325 each coordinate Zn(2+). Positions Asp1290–Glu1366 are disordered. The span at Met1295–Ala1305 shows a compositional bias: polar residues. The span at Leu1354–Glu1366 shows a compositional bias: low complexity.

It belongs to the RNA polymerase beta' chain family. RpoC2 subfamily. As to quaternary structure, in cyanobacteria the RNAP catalytic core is composed of 2 alpha, 1 beta, 1 beta', 1 gamma and 1 omega subunit. When a sigma factor is associated with the core the holoenzyme is formed, which can initiate transcription. It depends on Zn(2+) as a cofactor.

The catalysed reaction is RNA(n) + a ribonucleoside 5'-triphosphate = RNA(n+1) + diphosphate. DNA-dependent RNA polymerase catalyzes the transcription of DNA into RNA using the four ribonucleoside triphosphates as substrates. The chain is DNA-directed RNA polymerase subunit beta' from Prochlorococcus marinus (strain MIT 9515).